The primary structure comprises 20 residues: Acidic phospholipase A2 CbIbeta (20 aa).

Belongs to the phospholipase A2 family. Group II subfamily. D49 sub-subfamily. Heterodimer of an acidic subunit (CbIalpha or CbIbeta) and a basic subunit (CbII). The acidic subunit (CbI) is non-toxic, and increases the toxicity of the basic subunit (CbII). It depends on Ca(2+) as a cofactor. In terms of processing, contains 7 disulfide bonds. As to expression, expressed by the venom gland.

Its subcellular location is the secreted. The enzyme catalyses a 1,2-diacyl-sn-glycero-3-phosphocholine + H2O = a 1-acyl-sn-glycero-3-phosphocholine + a fatty acid + H(+). Its function is as follows. Heterodimer: presynaptic neurotoxin. Functionally, monomer: Snake venom phospholipase A2 (PLA2) is inactive towards micellar phosphatidylcholine but is weakly active towards non-micellar dithiolecithin. PLA2 catalyzes the calcium-dependent hydrolysis of the 2-acyl groups in 3-sn-phosphoglycerides. This is Acidic phospholipase A2 CbIbeta from Pseudocerastes fieldi (Field's horned viper).